Reading from the N-terminus, the 131-residue chain is Peptide methionine sulfoxide reductase MsrB (131 aa).

The 123-residue stretch at 8 to 130 (LEEWRAMLDP…NSVCLDLKPR (123 aa)) folds into the MsrB domain. Zn(2+) is bound by residues C47, C50, C96, and C99. Residue C119 is the Nucleophile of the active site.

The protein belongs to the MsrB Met sulfoxide reductase family. Requires Zn(2+) as cofactor.

The catalysed reaction is L-methionyl-[protein] + [thioredoxin]-disulfide + H2O = L-methionyl-(R)-S-oxide-[protein] + [thioredoxin]-dithiol. This chain is Peptide methionine sulfoxide reductase MsrB, found in Pseudomonas entomophila (strain L48).